The following is a 247-amino-acid chain: Granulin (247 aa).

This sequence belongs to the polyhedrin family.

Functionally, component of the virus occlusion bodies, which are large proteinaceous structures, that protect the virus from the outside environment for extended periods until they are ingested by insect larvae. This is Granulin from Agrotis segetum granulosis virus (AsGV).